A 341-amino-acid chain; its full sequence is MLLLHYFNLSHFQVNDHFYPHMRNFLYGETAFYVADTINMMFYIWVLFSAQQFHFNFTLVSGTQYVIHFFDNLAIIVMRLHSLLGFTDDFDIGSNVVFNGAMTFSVYCIVAAMCSLPFSILERCFATRYLKDYEANSRAYISYALVFLLNFIGIIGAILLQNKNNTIFVVAFLMILNLFALLTNQFLRTWNLKKYEECHSNVSIRFQRGGKYSLAKRFQISENIKSLHMLNFIILYMGFMNVCLVISVLFSSFDISPERQAICSLALDASIFFYSFAIPQIMTCFCHKWKVQTNTFRIRIGCLRTGKVNLEPLRDTFGGDMRGSVSMNRYFDQLQDSWENA.

Helical transmembrane passes span 30–50 (TAFY…LFSA), 57–77 (FTLV…AIIV), 101–121 (AMTF…FSIL), 140–160 (YISY…AILL), 167–187 (IFVV…NQFL), 230–250 (LNFI…SVLF), and 262–282 (ICSL…PQIM).

The protein belongs to the nematode receptor-like protein sre family.

The protein localises to the membrane. This chain is Serpentine receptor class epsilon-12 (sre-12), found in Caenorhabditis elegans.